We begin with the raw amino-acid sequence, 955 residues long: MSQLLQQLGTDNEFIRRHNGPASSEHQHMLNTIGAETLQQLIEETVPSSIRLPQPMQLPHGLSENAMLAELKQIAQQNTLNTSYIGQGYYNTHTPNVILRNVLENPGWYTAYTPYQPEISQGRLEALLNYQQMVMDLTGLEIANASLLDEATAAAEAMTLCKRGGKSKSNIFFVADDVHPQTLAVIKTRAKFIGFDVIVDNESNLDSHDVFGALLQYPGTTGEVKDLTDLIAQAHTKKTLVVVATDLLASVLLKPVGEMGADIAIGSAQRFGVPMGYGGPHAAFMATREKLKRSMPGRVIGVSIDSKGNQALRMAMQTREQHIRREKATSNICTAQALLANMASFYAVYHGPEGLKTIARRVHHFTAIVAKALQTAGFELEHQHFFDTLTVKTEQQTDILYTKALASSINLRKFDTKLGISFDETTTVSDLVTLLAVFGIDNAECETLSAEVGKDEFAAIPKHCQRTSSFLTHPVFNTYHSETQMLRYLKKLENKDFSLTHGMIPLGSCTMKLNAVAEMLPVTWPEFGGIHPFAPLNQAAGYTTLATSLKSMLCEITGYDEFSLQPNSGASGEYAGLIAIQRYHESRGDAHRNVCLIPSSAHGTNPATASMVSMKVVVVKCDENGNIDMIDLAEKIEKHQENLSSIMITYPSTHGVYEEQVREVCDMVHAAGGQVYLDGANMNAQVGLTSPGFIGSDVSHLNLHKTFCIPHGGGGPGMGPIGVKSHLAPFLPGHTENGVQGTDYAVSAADLGSASILPISWAYIAMMGEMGLTEATKVAILNANYVMERLRPHYPVLYRGSNGRIAHECIIDIRPLKEATGISEEDIAKRLMDFGFHAPTMSFPVAGTLMVEPTESEDLAELDRFCDAMIAIREEMHKVEQGEWPLDNNPLVNAPHTQVDLMSDSWDHPYTREVACFPSSQSKDSKYWPTVNRVDNVYGDRNLICSCPSIENYEE.

Position 705 is an N6-(pyridoxal phosphate)lysine (lysine 705).

It belongs to the GcvP family. In terms of assembly, the glycine cleavage system is composed of four proteins: P, T, L and H. Pyridoxal 5'-phosphate serves as cofactor.

The catalysed reaction is N(6)-[(R)-lipoyl]-L-lysyl-[glycine-cleavage complex H protein] + glycine + H(+) = N(6)-[(R)-S(8)-aminomethyldihydrolipoyl]-L-lysyl-[glycine-cleavage complex H protein] + CO2. Functionally, the glycine cleavage system catalyzes the degradation of glycine. The P protein binds the alpha-amino group of glycine through its pyridoxal phosphate cofactor; CO(2) is released and the remaining methylamine moiety is then transferred to the lipoamide cofactor of the H protein. The polypeptide is Glycine dehydrogenase (decarboxylating) (Aliivibrio fischeri (strain MJ11) (Vibrio fischeri)).